A 405-amino-acid chain; its full sequence is L-carnitine CoA-transferase (405 aa).

Residues Lys-97 and Arg-104 each contribute to the CoA site. The active-site Nucleophile is the Asp-169.

This sequence belongs to the CoA-transferase III family. CaiB subfamily. Homodimer.

The protein resides in the cytoplasm. It carries out the reaction crotonobetainyl-CoA + (R)-carnitine = crotonobetaine + (R)-carnitinyl-CoA. The catalysed reaction is 4-(trimethylamino)butanoyl-CoA + (R)-carnitine = (R)-carnitinyl-CoA + 4-(trimethylamino)butanoate. The protein operates within amine and polyamine metabolism; carnitine metabolism. Catalyzes the reversible transfer of the CoA moiety from gamma-butyrobetainyl-CoA to L-carnitine to generate L-carnitinyl-CoA and gamma-butyrobetaine. Is also able to catalyze the reversible transfer of the CoA moiety from gamma-butyrobetainyl-CoA or L-carnitinyl-CoA to crotonobetaine to generate crotonobetainyl-CoA. The sequence is that of L-carnitine CoA-transferase from Salmonella enteritidis PT4 (strain P125109).